We begin with the raw amino-acid sequence, 260 residues long: Large ribosomal subunit protein uL2y (260 aa).

Residues 227–248 (RRDKSAGAKVGQIAARRTGRRR) are disordered.

It belongs to the universal ribosomal protein uL2 family.

The chain is Large ribosomal subunit protein uL2y (RPL8B) from Arabidopsis thaliana (Mouse-ear cress).